The sequence spans 332 residues: Ribosomal RNA small subunit methyltransferase C (332 aa).

This sequence belongs to the methyltransferase superfamily. RsmC family. As to quaternary structure, monomer.

It localises to the cytoplasm. The enzyme catalyses guanosine(1207) in 16S rRNA + S-adenosyl-L-methionine = N(2)-methylguanosine(1207) in 16S rRNA + S-adenosyl-L-homocysteine + H(+). Its function is as follows. Specifically methylates the guanine in position 1207 of 16S rRNA in the 30S particle. The polypeptide is Ribosomal RNA small subunit methyltransferase C (Pseudomonas entomophila (strain L48)).